The primary structure comprises 90 residues: Small ribosomal subunit protein bS16 (90 aa).

Belongs to the bacterial ribosomal protein bS16 family.

The polypeptide is Small ribosomal subunit protein bS16 (Moorella thermoacetica (strain ATCC 39073 / JCM 9320)).